We begin with the raw amino-acid sequence, 288 residues long: Transmembrane and coiled-coil domain-containing protein 5A (288 aa).

The stretch at 10-189 (KKNIISLNMD…ELETGYLERE (180 aa)) forms a coiled coil. The chain crosses the membrane as a helical span at residues 227 to 249 (SLLFSTLFFIRLLGYLIFHLSFI).

This sequence belongs to the TMCO5 family. In terms of tissue distribution, only detected in testis (at protein level).

Its subcellular location is the endoplasmic reticulum membrane. The protein resides in the nucleus membrane. The chain is Transmembrane and coiled-coil domain-containing protein 5A (Tmco5a) from Mus musculus (Mouse).